The primary structure comprises 112 residues: Mitochondrial import inner membrane translocase subunit TIM14-3 (112 aa).

Alanine 2 carries the N-acetylalanine modification. Residues 6 to 28 (IAGAAVAAAAVAGRYGILAWQAF) form a helical membrane-spanning segment. In terms of domain architecture, J spans 53-112 (EAALILGVRESVVADKVKEAHRRVMVANHPDAGGSHYLASKINEAKDMMLGKSNNSGSAF).

This sequence belongs to the TIM14 family. As to quaternary structure, probable component of the PAM complex at least composed of a mitochondrial HSP70 protein, TIMM44 and TIMM14. The complex interacts with the TIMM23 component of the TIM17:23 complex.

It is found in the mitochondrion. It localises to the mitochondrion inner membrane. Functionally, component of the PAM complex, a complex required for the translocation of transit peptide-containing proteins from the inner membrane into the mitochondrial matrix in an ATP-dependent manner. This Arabidopsis thaliana (Mouse-ear cress) protein is Mitochondrial import inner membrane translocase subunit TIM14-3 (TIM14-3).